A 160-amino-acid chain; its full sequence is SsrA-binding protein (160 aa).

The tract at residues 1–23 (MARKKKQDKGQGPKTIAQNRRAR) is disordered.

It belongs to the SmpB family.

The protein localises to the cytoplasm. Its function is as follows. Required for rescue of stalled ribosomes mediated by trans-translation. Binds to transfer-messenger RNA (tmRNA), required for stable association of tmRNA with ribosomes. tmRNA and SmpB together mimic tRNA shape, replacing the anticodon stem-loop with SmpB. tmRNA is encoded by the ssrA gene; the 2 termini fold to resemble tRNA(Ala) and it encodes a 'tag peptide', a short internal open reading frame. During trans-translation Ala-aminoacylated tmRNA acts like a tRNA, entering the A-site of stalled ribosomes, displacing the stalled mRNA. The ribosome then switches to translate the ORF on the tmRNA; the nascent peptide is terminated with the 'tag peptide' encoded by the tmRNA and targeted for degradation. The ribosome is freed to recommence translation, which seems to be the essential function of trans-translation. The protein is SsrA-binding protein of Thermobifida fusca (strain YX).